A 209-amino-acid polypeptide reads, in one-letter code: Methylthioribulose-1-phosphate dehydratase (209 aa).

Zn(2+)-binding residues include His99 and His101.

The protein belongs to the aldolase class II family. MtnB subfamily. Zn(2+) is required as a cofactor.

The enzyme catalyses 5-(methylsulfanyl)-D-ribulose 1-phosphate = 5-methylsulfanyl-2,3-dioxopentyl phosphate + H2O. The protein operates within amino-acid biosynthesis; L-methionine biosynthesis via salvage pathway; L-methionine from S-methyl-5-thio-alpha-D-ribose 1-phosphate: step 2/6. Functionally, catalyzes the dehydration of methylthioribulose-1-phosphate (MTRu-1-P) into 2,3-diketo-5-methylthiopentyl-1-phosphate (DK-MTP-1-P). This chain is Methylthioribulose-1-phosphate dehydratase, found in Leptospira biflexa serovar Patoc (strain Patoc 1 / Ames).